A 283-amino-acid chain; its full sequence is Diaminopimelate epimerase (283 aa).

Substrate is bound by residues N13 and N66. The active-site Proton donor is C75. Residues 76 to 77 (GN), N165, N198, and 216 to 217 (ER) contribute to the substrate site. C225 acts as the Proton acceptor in catalysis. 226–227 (GT) contacts substrate.

Belongs to the diaminopimelate epimerase family. As to quaternary structure, homodimer.

Its subcellular location is the cytoplasm. The enzyme catalyses (2S,6S)-2,6-diaminopimelate = meso-2,6-diaminopimelate. It participates in amino-acid biosynthesis; L-lysine biosynthesis via DAP pathway; DL-2,6-diaminopimelate from LL-2,6-diaminopimelate: step 1/1. In terms of biological role, catalyzes the stereoinversion of LL-2,6-diaminopimelate (L,L-DAP) to meso-diaminopimelate (meso-DAP), a precursor of L-lysine and an essential component of the bacterial peptidoglycan. This Acaryochloris marina (strain MBIC 11017) protein is Diaminopimelate epimerase.